A 787-amino-acid chain; its full sequence is Aconitate hydratase, mitochondrial (787 aa).

The transit peptide at 1–33 directs the protein to the mitochondrion; sequence MISTRLARAGALAPKSRLFLGTRAFATVGDSPL. Substrate is bound by residues Gln104 and 197 to 199; that span reads DSH. Residues Cys390, Cys453, and Cys456 each contribute to the [4Fe-4S] cluster site. Substrate-binding residues include Arg479 and Arg484. Residues 529-559 are disordered; it reads LQPPTGEGLPAKGYDPGRDTYQAPPADRSSV. Substrate-binding positions include Arg612 and 675–676; that span reads SR.

The protein belongs to the aconitase/IPM isomerase family. [4Fe-4S] cluster is required as a cofactor.

The protein localises to the mitochondrion. The catalysed reaction is citrate = D-threo-isocitrate. It carries out the reaction (2R)-homocitrate = cis-homoaconitate + H2O. The protein operates within carbohydrate metabolism; tricarboxylic acid cycle; isocitrate from oxaloacetate: step 2/2. It functions in the pathway amino-acid biosynthesis; L-lysine biosynthesis via AAA pathway; L-alpha-aminoadipate from 2-oxoglutarate: step 2/5. Functionally, catalyzes the isomerization of citrate to isocitrate via cis-aconitate, a step in the citric acid cycle. Also catalyzes the reversible dehydration of (R)-homocitrate to cis-homoaconitate, a step in the alpha-aminoadipate pathway for lysine biosynthesis. This Aspergillus fumigatus (strain ATCC MYA-4609 / CBS 101355 / FGSC A1100 / Af293) (Neosartorya fumigata) protein is Aconitate hydratase, mitochondrial (acoA).